A 76-amino-acid chain; its full sequence is Large ribosomal subunit protein uL24 (76 aa).

Belongs to the universal ribosomal protein uL24 family. As to quaternary structure, part of the 50S ribosomal subunit.

In terms of biological role, one of two assembly initiator proteins, it binds directly to the 5'-end of the 23S rRNA, where it nucleates assembly of the 50S subunit. One of the proteins that surrounds the polypeptide exit tunnel on the outside of the subunit. This chain is Large ribosomal subunit protein uL24, found in Campylobacter hominis (strain ATCC BAA-381 / DSM 21671 / CCUG 45161 / LMG 19568 / NCTC 13146 / CH001A).